Here is a 274-residue protein sequence, read N- to C-terminus: 3-methyl-2-oxobutanoate hydroxymethyltransferase (274 aa).

Mg(2+) is bound by residues D44 and D83. 3-methyl-2-oxobutanoate-binding positions include 44 to 45 (DS), D83, and K113. E115 is a binding site for Mg(2+). E182 functions as the Proton acceptor in the catalytic mechanism.

Belongs to the PanB family. In terms of assembly, homodecamer; pentamer of dimers. Requires Mg(2+) as cofactor.

Its subcellular location is the cytoplasm. It carries out the reaction 3-methyl-2-oxobutanoate + (6R)-5,10-methylene-5,6,7,8-tetrahydrofolate + H2O = 2-dehydropantoate + (6S)-5,6,7,8-tetrahydrofolate. The protein operates within cofactor biosynthesis; (R)-pantothenate biosynthesis; (R)-pantoate from 3-methyl-2-oxobutanoate: step 1/2. Functionally, catalyzes the reversible reaction in which hydroxymethyl group from 5,10-methylenetetrahydrofolate is transferred onto alpha-ketoisovalerate to form ketopantoate. The protein is 3-methyl-2-oxobutanoate hydroxymethyltransferase of Campylobacter jejuni subsp. jejuni serotype O:23/36 (strain 81-176).